We begin with the raw amino-acid sequence, 182 residues long: NADH-quinone oxidoreductase subunit B (182 aa).

Cys46, Cys47, Cys112, and Cys141 together coordinate [4Fe-4S] cluster.

It belongs to the complex I 20 kDa subunit family. As to quaternary structure, NDH-1 is composed of 14 different subunits. Subunits NuoB, C, D, E, F, and G constitute the peripheral sector of the complex. Requires [4Fe-4S] cluster as cofactor.

The protein resides in the cell inner membrane. It catalyses the reaction a quinone + NADH + 5 H(+)(in) = a quinol + NAD(+) + 4 H(+)(out). Its function is as follows. NDH-1 shuttles electrons from NADH, via FMN and iron-sulfur (Fe-S) centers, to quinones in the respiratory chain. The immediate electron acceptor for the enzyme in this species is believed to be a menaquinone. Couples the redox reaction to proton translocation (for every two electrons transferred, four hydrogen ions are translocated across the cytoplasmic membrane), and thus conserves the redox energy in a proton gradient. This is NADH-quinone oxidoreductase subunit B from Flavobacterium johnsoniae (strain ATCC 17061 / DSM 2064 / JCM 8514 / BCRC 14874 / CCUG 350202 / NBRC 14942 / NCIMB 11054 / UW101) (Cytophaga johnsonae).